Here is a 229-residue protein sequence, read N- to C-terminus: Trehalose-6-phosphate phosphatase-related protein (229 aa).

The active-site Nucleophile is the aspartate 5. Aspartate 5, aspartate 7, and aspartate 177 together coordinate Mg(2+). 5–7 is a substrate binding site; sequence DYD.

This sequence belongs to the trehalose phosphatase family. Mg(2+) is required as a cofactor.

The enzyme catalyses alpha,alpha-trehalose 6-phosphate + H2O = alpha,alpha-trehalose + phosphate. It participates in glycan biosynthesis; trehalose biosynthesis. Its function is as follows. Removes the phosphate from trehalose 6-phosphate (Tre6P) to produce free trehalose. Also catalyzes the dephosphorylation of para-nitrophenyl phosphate (pNPP), but with lesser efficiency (in vitro). The sequence is that of Trehalose-6-phosphate phosphatase-related protein from Thermoplasma acidophilum (strain ATCC 25905 / DSM 1728 / JCM 9062 / NBRC 15155 / AMRC-C165).